Consider the following 794-residue polypeptide: Copper-exporting P-type ATPase (794 aa).

2 consecutive HMA domains span residues 5-70 (KKTT…YGVL) and 72-138 (ETAE…YDAQ). The Cu(+) site is built by cysteine 16, cysteine 19, cysteine 83, and cysteine 86. A run of 6 helical transmembrane segments spans residues 162–182 (IISA…LFGI), 187–207 (IFMN…IIGW), 224–244 (MDVL…YEMV), 250–270 (ANVM…LILF), 411–431 (YFVP…IAFV), and 438–458 (PALV…LGLA). The active-site 4-aspartylphosphate intermediate is aspartate 495. Residues aspartate 689 and aspartate 693 each coordinate Mg(2+). A run of 2 helical transmembrane segments spans residues 747-766 (LFWA…LGLL) and 770-789 (IAGA…ALRL).

This sequence belongs to the cation transport ATPase (P-type) (TC 3.A.3) family. Type IB subfamily.

It is found in the cell membrane. It carries out the reaction Cu(+)(in) + ATP + H2O = Cu(+)(out) + ADP + phosphate + H(+). Functionally, involved in copper export. This chain is Copper-exporting P-type ATPase (copA), found in Staphylococcus saprophyticus subsp. saprophyticus (strain ATCC 15305 / DSM 20229 / NCIMB 8711 / NCTC 7292 / S-41).